A 581-amino-acid chain; its full sequence is NADH-quinone oxidoreductase subunit C/D (581 aa).

The tract at residues 1 to 172 is NADH dehydrogenase I subunit C; that stretch reads MSATDLVSEL…PLFNMTAALF (172 aa). The segment at 196–581 is NADH dehydrogenase I subunit D; sequence ELMILNYGPH…IDYVMSDVDR (386 aa).

The protein in the N-terminal section; belongs to the complex I 30 kDa subunit family. This sequence in the C-terminal section; belongs to the complex I 49 kDa subunit family. As to quaternary structure, NDH-1 is composed of 13 different subunits. Subunits NuoB, CD, E, F, and G constitute the peripheral sector of the complex.

The protein localises to the cell inner membrane. It carries out the reaction a quinone + NADH + 5 H(+)(in) = a quinol + NAD(+) + 4 H(+)(out). NDH-1 shuttles electrons from NADH, via FMN and iron-sulfur (Fe-S) centers, to quinones in the respiratory chain. The immediate electron acceptor for the enzyme in this species is believed to be ubiquinone. Couples the redox reaction to proton translocation (for every two electrons transferred, four hydrogen ions are translocated across the cytoplasmic membrane), and thus conserves the redox energy in a proton gradient. The protein is NADH-quinone oxidoreductase subunit C/D of Rhodopseudomonas palustris (strain HaA2).